The sequence spans 208 residues: Large ribosomal subunit protein bL25 (208 aa).

This sequence belongs to the bacterial ribosomal protein bL25 family. CTC subfamily. As to quaternary structure, part of the 50S ribosomal subunit; part of the 5S rRNA/L5/L18/L25 subcomplex. Contacts the 5S rRNA. Binds to the 5S rRNA independently of L5 and L18.

This is one of the proteins that binds to the 5S RNA in the ribosome where it forms part of the central protuberance. The chain is Large ribosomal subunit protein bL25 from Burkholderia thailandensis (strain ATCC 700388 / DSM 13276 / CCUG 48851 / CIP 106301 / E264).